A 383-amino-acid chain; its full sequence is NIPA-like protein 2 (383 aa).

2 N-linked (GlcNAc...) asparagine glycosylation sites follow: asparagine 23 and asparagine 33. 7 helical membrane passes run 46–66 (IHLFGVLLAILGNLVISISLN), 88–108 (VLWWGGVLLMAVGETGNFAAY), 110–130 (FAPITLIAPLGCVSVTGSAII), 144–164 (LLGTTLAFAGTYLLVNFAPNI), 177–197 (LVGWQFLIYVILEILIFCILL), 209–229 (VILLTLVAILASLTVISVKAV), and 243–263 (LTYPIFYIMFIIMIASCVFQV). N-linked (GlcNAc...) asparagine glycosylation occurs at asparagine 274. 2 helical membrane-spanning segments follow: residues 278–298 (VVPVNHIFFTISAIIAGIIFY) and 306–326 (FLTVFIYLFGCFLSFLGVFLV). A disordered region spans residues 355-383 (QPDSHSLSYGTLPDGSDSTKSQSGEKKEV).

The protein belongs to the NIPA family.

The protein resides in the membrane. In Homo sapiens (Human), this protein is NIPA-like protein 2 (NIPAL2).